Reading from the N-terminus, the 229-residue chain is Serine acetyltransferase (229 aa).

It belongs to the transferase hexapeptide repeat family.

The protein localises to the cytoplasm. The catalysed reaction is L-serine + acetyl-CoA = O-acetyl-L-serine + CoA. It participates in amino-acid biosynthesis; L-cysteine biosynthesis; L-cysteine from L-serine: step 1/2. Functionally, catalyzes the acetylation of serine by acetyl-CoA to produce O-acetylserine (OAS). The sequence is that of Serine acetyltransferase (cysE) from Mycobacterium tuberculosis (strain ATCC 25618 / H37Rv).